We begin with the raw amino-acid sequence, 867 residues long: Cadherin-related family member 1 (867 aa).

An N-terminal signal peptide occupies residues 1–21 (MGRGPPAVLAPWMLFLSLAQA). Residues 22–701 (NFAPHFFDNG…LMQTKDNPMK (680 aa)) lie on the Extracellular side of the membrane. 6 Cadherin domains span residues 36–135 (NGNM…APRF), 136–247 (IQEP…GPVF), 248–354 (VGTP…PPTF), 360–473 (PQNR…VPKF), 474–577 (TSHY…YPQF), and 574–689 (YPQF…SPMA). N-linked (GlcNAc...) asparagine glycans are attached at residues N58 and N89. Residues N288 and N297 are each glycosylated (N-linked (GlcNAc...) asparagine). The helical transmembrane segment at 702–722 (AVGVLAGIMAIIVAITVLIST) threads the bilayer. Residues 723 to 867 (ATFWRNKKSN…KKNLHSKAYF (145 aa)) are Cytoplasmic-facing. The disordered stretch occupies residues 767-843 (KFVLREAPPN…VAKRKAVGSP (77 aa)). Residues 777 to 786 (ENCNNNSRGS) show a composition bias toward polar residues. The segment covering 790–802 (PQAPAPPPPPSPA) has biased composition (pro residues).

As to quaternary structure, interacts with PROM1. In terms of processing, undergoes proteolytic cleavage; produces a soluble 95 kDa N-terminal fragment and a 25 kDa cell-associated C-terminal fragment. As to expression, expressed in photoreceptor cells of the outer nuclear layer of the retina.

Its subcellular location is the cell membrane. Its function is as follows. Potential calcium-dependent cell-adhesion protein. May be required for the structural integrity of the outer segment (OS) of photoreceptor cells. The sequence is that of Cadherin-related family member 1 (CDHR1) from Bos taurus (Bovine).